Consider the following 244-residue polypeptide: Thiol S-methyltransferase TMT1A (244 aa).

Positions 1–28 (MELTIFILRLAIYILTFPLYLLNFLGLW) are targeting to lipid droplets. The first 29 residues, 1 to 29 (MELTIFILRLAIYILTFPLYLLNFLGLWS), serve as a signal peptide directing secretion.

Belongs to the methyltransferase superfamily. (Microbial infection) Interacts with HCV non-structural protein 4B/NS4B (via C-terminal region); this interaction may promote the recruitment of NS4B in the proximity of lipid droplet. In terms of assembly, self-associates. Interacts with SNRNP200; this interaction may promote the odontogenic differentiation. Methylated at lysine residues most likely by EZH2. As to expression, expressed in the liver.

The protein localises to the lipid droplet. The protein resides in the endoplasmic reticulum. It localises to the membrane. Its subcellular location is the microsome. It is found in the cytoplasm. The protein localises to the cytosol. It carries out the reaction a thiol + S-adenosyl-L-methionine = a methyl thioether + S-adenosyl-L-homocysteine + H(+). The enzyme catalyses an adenosine in mRNA + S-adenosyl-L-methionine = an N(6)-methyladenosine in mRNA + S-adenosyl-L-homocysteine + H(+). Inhibited by 2,3-dichloro-alpha-methylbenzylamine (DCMB). Thiol S-methyltransferase that catalyzes the transfer of a methyl group from S-adenosyl-L-methionine to alkyl and phenolic thiol-containing acceptor substrates. Together with TMT1B accounts for most of S-thiol methylation activity in the endoplasmic reticulum of hepatocytes. Able to methylate the N6 position of adenosine residues in long non-coding RNAs (lncRNAs). May facilitate lncRNAs transfer into exosomes at the tumor-stroma interface. Promotes osteogenic and odontogenic differentiation by regulating the expression of genes involved in stem cell differentiation and survival. Targeted from the endoplasmic reticulum to lipid droplets, where it recruits cellular proteins to form functional organelles. Its function is as follows. (Microbial infection) May be involved in the assembly and release stages of hepatitis C virus (HCV) life cycle and thus play a crucial role in HCV propagation. The chain is Thiol S-methyltransferase TMT1A from Homo sapiens (Human).